The primary structure comprises 515 residues: MTKRALISVSDKRGIVDLARELKHLGWDIISTGGTRLALEEAGVVTVAIDDVTGFPEMMDGRVKTLHPLIHGGLLARRDIEHHLQAAKQNRIELIDLVVVNLYPFKETICRSDITYDVAVDMVDIGGPSLLRSAAKNHASVTVVVDPTDYPLVLGELASTGSTSYQTRQSLAAKAFRHTAAYDAVIADYFTRQAGETKPEKLTLTYDLKQSMRYGENPQQAADFYQRALPITYSIASAKQLNGKELSFNNIRDADAAIRIIRDFKERPTVVALKHMNPCGIGQADDIETAWDFAYAADPVSIFGGIVVLNREVDLATAEKLHAIFLELIIAPSYSKEALAVLTHKKKHLRILELPFAAQEASEIEAEYTGVLGGLLVQNQDVVTESPADWIVVTKRQPNEQEMAALAFAWKTIKYVKSNAIIIANDHMTLGVGPGQTNRIASVRIAIAQATGQLEGAVLASDAFFPFADSIEEIAAAGIKAIIQPGGSIRDSESIAAADQHGITMIFTGVRHFRH.

The MGS-like domain maps to 1 to 145 (MTKRALISVS…KNHASVTVVV (145 aa)).

It belongs to the PurH family.

It catalyses the reaction (6R)-10-formyltetrahydrofolate + 5-amino-1-(5-phospho-beta-D-ribosyl)imidazole-4-carboxamide = 5-formamido-1-(5-phospho-D-ribosyl)imidazole-4-carboxamide + (6S)-5,6,7,8-tetrahydrofolate. It carries out the reaction IMP + H2O = 5-formamido-1-(5-phospho-D-ribosyl)imidazole-4-carboxamide. It functions in the pathway purine metabolism; IMP biosynthesis via de novo pathway; 5-formamido-1-(5-phospho-D-ribosyl)imidazole-4-carboxamide from 5-amino-1-(5-phospho-D-ribosyl)imidazole-4-carboxamide (10-formyl THF route): step 1/1. The protein operates within purine metabolism; IMP biosynthesis via de novo pathway; IMP from 5-formamido-1-(5-phospho-D-ribosyl)imidazole-4-carboxamide: step 1/1. This chain is Bifunctional purine biosynthesis protein PurH, found in Streptococcus equi subsp. zooepidemicus (strain H70).